The chain runs to 79 residues: MPRPRKADRTPARQRPNPLDRDGVTYVDYKDTELLRKFVSDRGKIRSRRVTRVTSQQQRQLARAIKNAREMALLPYGTR.

Basic and acidic residues predominate over residues 1–11 (MPRPRKADRTP). Positions 1–24 (MPRPRKADRTPARQRPNPLDRDGV) are disordered.

It belongs to the bacterial ribosomal protein bS18 family. As to quaternary structure, part of the 30S ribosomal subunit. Forms a tight heterodimer with protein bS6.

Its function is as follows. Binds as a heterodimer with protein bS6 to the central domain of the 16S rRNA, where it helps stabilize the platform of the 30S subunit. In Streptomyces coelicolor (strain ATCC BAA-471 / A3(2) / M145), this protein is Small ribosomal subunit protein bS18B.